A 340-amino-acid chain; its full sequence is Photosystem II protein D1 (340 aa).

Transmembrane regions (helical) follow at residues 25 to 42, 114 to 129, and 138 to 152; these read YIGW…LATV, HFFL…EWEF, and WIFV…AAAA. Residue His114 coordinates chlorophyll a. Trp122 provides a ligand contact to pheophytin a. 2 residues coordinate [CaMn4O5] cluster: Asp166 and Glu185. Residues 193–214 traverse the membrane as a helical segment; sequence FHILGVAGVFGGSLFSAMHGSL. A chlorophyll a-binding site is contributed by His194. A quinone is bound by residues His211 and 260 to 261; that span reads SF. His211 is a binding site for Fe cation. His268 provides a ligand contact to Fe cation. A helical transmembrane segment spans residues 270-284; that stretch reads FLAAWPVIGIWFTSL. [CaMn4O5] cluster is bound by residues His328, Glu329, Asp338, and Ala340.

This sequence belongs to the reaction center PufL/M/PsbA/D family. In terms of assembly, PSII is composed of 1 copy each of membrane proteins PsbA, PsbB, PsbC, PsbD, PsbE, PsbF, PsbH, PsbI, PsbJ, PsbK, PsbL, PsbM, PsbT, PsbX, PsbY, PsbZ, Psb30/Ycf12, at least 3 peripheral proteins of the oxygen-evolving complex and a large number of cofactors. It forms dimeric complexes. The D1/D2 heterodimer binds P680, chlorophylls that are the primary electron donor of PSII, and subsequent electron acceptors. It shares a non-heme iron and each subunit binds pheophytin, quinone, additional chlorophylls, carotenoids and lipids. D1 provides most of the ligands for the Mn4-Ca-O5 cluster of the oxygen-evolving complex (OEC). There is also a Cl(-1) ion associated with D1 and D2, which is required for oxygen evolution. The PSII complex binds additional chlorophylls, carotenoids and specific lipids. is required as a cofactor. In terms of processing, tyr-157 forms a radical intermediate that is referred to as redox-active TyrZ, YZ or Y-Z.

It localises to the plastid. Its subcellular location is the chloroplast thylakoid membrane. It carries out the reaction 2 a plastoquinone + 4 hnu + 2 H2O = 2 a plastoquinol + O2. Its function is as follows. Photosystem II (PSII) is a light-driven water:plastoquinone oxidoreductase that uses light energy to abstract electrons from H(2)O, generating O(2) and a proton gradient subsequently used for ATP formation. It consists of a core antenna complex that captures photons, and an electron transfer chain that converts photonic excitation into a charge separation. The D1/D2 (PsbA/PsbD) reaction center heterodimer binds P680, the primary electron donor of PSII as well as several subsequent electron acceptors. This Amphidinium operculatum (Dinoflagellate) protein is Photosystem II protein D1.